We begin with the raw amino-acid sequence, 184 residues long: ATP synthase subunit b, chloroplastic (184 aa).

Residues 27 to 49 traverse the membrane as a helical segment; that stretch reads LATNPINLSVVLGVLIFFGKGVL.

This sequence belongs to the ATPase B chain family. In terms of assembly, F-type ATPases have 2 components, F(1) - the catalytic core - and F(0) - the membrane proton channel. F(1) has five subunits: alpha(3), beta(3), gamma(1), delta(1), epsilon(1). F(0) has four main subunits: a(1), b(1), b'(1) and c(10-14). The alpha and beta chains form an alternating ring which encloses part of the gamma chain. F(1) is attached to F(0) by a central stalk formed by the gamma and epsilon chains, while a peripheral stalk is formed by the delta, b and b' chains.

Its subcellular location is the plastid. The protein localises to the chloroplast thylakoid membrane. Its function is as follows. F(1)F(0) ATP synthase produces ATP from ADP in the presence of a proton or sodium gradient. F-type ATPases consist of two structural domains, F(1) containing the extramembraneous catalytic core and F(0) containing the membrane proton channel, linked together by a central stalk and a peripheral stalk. During catalysis, ATP synthesis in the catalytic domain of F(1) is coupled via a rotary mechanism of the central stalk subunits to proton translocation. Functionally, component of the F(0) channel, it forms part of the peripheral stalk, linking F(1) to F(0). This is ATP synthase subunit b, chloroplastic from Morus indica (Mulberry).